A 424-amino-acid chain; its full sequence is tRNA modification GTPase MnmE (424 aa).

(6S)-5-formyl-5,6,7,8-tetrahydrofolate contacts are provided by Arg20, Glu77, and Arg117. Residues 212–351 (GVRVVFAGPP…LVRDLRDAAR (140 aa)) enclose the TrmE-type G domain. Asn222 lines the K(+) pocket. GTP is bound by residues 222 to 227 (NAGKST), 241 to 247 (SPIAGTT), and 266 to 269 (DTAG). Ser226 is a Mg(2+) binding site. K(+)-binding residues include Ser241, Ile243, and Thr246. Mg(2+) is bound at residue Thr247. Lys424 contributes to the (6S)-5-formyl-5,6,7,8-tetrahydrofolate binding site.

This sequence belongs to the TRAFAC class TrmE-Era-EngA-EngB-Septin-like GTPase superfamily. TrmE GTPase family. In terms of assembly, homodimer. Heterotetramer of two MnmE and two MnmG subunits. It depends on K(+) as a cofactor.

It is found in the cytoplasm. Its function is as follows. Exhibits a very high intrinsic GTPase hydrolysis rate. Involved in the addition of a carboxymethylaminomethyl (cmnm) group at the wobble position (U34) of certain tRNAs, forming tRNA-cmnm(5)s(2)U34. This Erythrobacter litoralis (strain HTCC2594) protein is tRNA modification GTPase MnmE.